A 347-amino-acid polypeptide reads, in one-letter code: Ribosomal RNA small subunit methyltransferase C (347 aa).

This sequence belongs to the methyltransferase superfamily. RsmC family. In terms of assembly, monomer.

It localises to the cytoplasm. The catalysed reaction is guanosine(1207) in 16S rRNA + S-adenosyl-L-methionine = N(2)-methylguanosine(1207) in 16S rRNA + S-adenosyl-L-homocysteine + H(+). Its function is as follows. Specifically methylates the guanine in position 1207 of 16S rRNA in the 30S particle. This is Ribosomal RNA small subunit methyltransferase C from Serratia proteamaculans (strain 568).